We begin with the raw amino-acid sequence, 428 residues long: Glutamate-1-semialdehyde 2,1-aminomutase (428 aa).

K265 bears the N6-(pyridoxal phosphate)lysine mark.

The protein belongs to the class-III pyridoxal-phosphate-dependent aminotransferase family. HemL subfamily. Homodimer. Requires pyridoxal 5'-phosphate as cofactor.

It localises to the cytoplasm. The enzyme catalyses (S)-4-amino-5-oxopentanoate = 5-aminolevulinate. It functions in the pathway porphyrin-containing compound metabolism; protoporphyrin-IX biosynthesis; 5-aminolevulinate from L-glutamyl-tRNA(Glu): step 2/2. This is Glutamate-1-semialdehyde 2,1-aminomutase from Aeromonas hydrophila subsp. hydrophila (strain ATCC 7966 / DSM 30187 / BCRC 13018 / CCUG 14551 / JCM 1027 / KCTC 2358 / NCIMB 9240 / NCTC 8049).